Consider the following 217-residue polypeptide: Adenylate kinase (217 aa).

11 to 16 (GSGKGT) serves as a coordination point for ATP. Residues 31–61 (STGTMLRQALTRSTHKSYELHKNIMHTGDLV) are NMP. AMP contacts are provided by residues Thr32, Arg37, 59–61 (DLV), 87–90 (GFPR), and Gln94. The interval 124–161 (GRRIHVGSGRTYHIKFNPPRNYGLDDITGEILTTRKDD) is LID. ATP contacts are provided by residues Arg125 and 134–135 (TY). AMP is bound by residues Arg158 and Arg169. Arg202 contacts ATP.

The protein belongs to the adenylate kinase family. In terms of assembly, monomer.

It is found in the cytoplasm. The enzyme catalyses AMP + ATP = 2 ADP. Its pathway is purine metabolism; AMP biosynthesis via salvage pathway; AMP from ADP: step 1/1. In terms of biological role, catalyzes the reversible transfer of the terminal phosphate group between ATP and AMP. Plays an important role in cellular energy homeostasis and in adenine nucleotide metabolism. This chain is Adenylate kinase, found in Blochmanniella pennsylvanica (strain BPEN).